Reading from the N-terminus, the 553-residue chain is Solute carrier family 45 member 3 (553 aa).

11 helical membrane-spanning segments follow: residues 19–39 (LLIN…ITYV), 52–72 (FMTM…PLLG), 88–108 (FIWA…RAGW), 120–140 (LELA…QVCF), 161–181 (YSVY…LPAI), 198–218 (CLFG…LLVA), 275–295 (FVAE…YTDF), 323–343 (MGSL…LVMD), 353–373 (AVYL…CLSH), 382–402 (AALT…LASL), and 522–542 (AYMV…TQVV).

It belongs to the glycoside-pentoside-hexuronide (GPH) cation symporter transporter (TC 2.A.2) family.

The protein localises to the membrane. It catalyses the reaction sucrose(out) + H(+)(out) = sucrose(in) + H(+)(in). In terms of biological role, proton-associated sucrose transporter. May be able to transport also glucose and fructose. The protein is Solute carrier family 45 member 3 (SLC45A3) of Macaca fascicularis (Crab-eating macaque).